Reading from the N-terminus, the 733-residue chain is Nuclear hormone receptor family member nhr-66 (733 aa).

Low complexity-rich tracts occupy residues 113–130 (PAIP…SQAS) and 165–185 (QQNR…QQQN). Residues 113–190 (PAIPSSSSCS…AQQQNSMARK (78 aa)) form a disordered region. The segment at residues 266–343 (VPACAICGTD…SGMDKNSVQH (78 aa)) is a DNA-binding region (nuclear receptor). 2 consecutive NR C4-type zinc fingers follow at residues 269–289 (CAIC…CAAC) and 305–326 (CNKG…CRAC). Residues 361-396 (PDAEFEPSAKVSTVSEPSTSSGPSGGFNQNVSSPAG) are disordered. Over residues 371–382 (VSTVSEPSTSSG) the composition is skewed to low complexity. An NR LBD domain is found at 444 to 687 (CLGDWFRKPS…ACFNQMLDVE (244 aa)). The tract at residues 676–687 (ADACFNQMLDVE) is AF-2. The interval 691 to 733 (VSPDGQKDSEAEQGPSPVSVPEAARGSYQDDDMPPVLEKNCDL) is disordered.

It belongs to the nuclear hormone receptor family. In terms of assembly, interacts with nuclear hormone receptor nhr-49; the interaction is direct. As to expression, widely expressed, including in hypodermis, gut, muscle, and neuronal cells of the ventral nerve cord, head, and tail ganglia. Expressed in the head ganglion in several sensory and interneurons, including AVA.

The protein localises to the nucleus. Transcription factor. Binds to regulatory elements and regulates transcription of target genes, including the potassium channel accessory subunit mps-2. Negatively regulates transcription of mps-2, thereby modulating age-dependent memory decline. In concert with nuclear hormone receptor nhr-49, involved in regulating target genes with roles in sphingolipid breakdown and lipid remodeling. Plays a role in modulating mitochondrial morphology and function. The sequence is that of Nuclear hormone receptor family member nhr-66 from Caenorhabditis elegans.